Here is a 487-residue protein sequence, read N- to C-terminus: N-succinylglutamate 5-semialdehyde dehydrogenase (487 aa).

Residue 221–226 (GSSDTG) coordinates NAD(+). Active-site residues include glutamate 244 and cysteine 278.

It belongs to the aldehyde dehydrogenase family. AstD subfamily.

It carries out the reaction N-succinyl-L-glutamate 5-semialdehyde + NAD(+) + H2O = N-succinyl-L-glutamate + NADH + 2 H(+). The protein operates within amino-acid degradation; L-arginine degradation via AST pathway; L-glutamate and succinate from L-arginine: step 4/5. In terms of biological role, catalyzes the NAD-dependent reduction of succinylglutamate semialdehyde into succinylglutamate. The protein is N-succinylglutamate 5-semialdehyde dehydrogenase of Burkholderia pseudomallei (strain 1106a).